The following is a 242-amino-acid chain: Probable transcriptional regulatory protein HEAR0561 (242 aa).

It belongs to the TACO1 family.

It localises to the cytoplasm. The chain is Probable transcriptional regulatory protein HEAR0561 from Herminiimonas arsenicoxydans.